We begin with the raw amino-acid sequence, 444 residues long: Tubulin beta-4A chain (444 aa).

The MREI motif signature appears at 1 to 4 (MREI). Positions 11, 69, 138, 142, 143, and 144 each coordinate GTP. Mg(2+) is bound at residue E69. At S172 the chain carries Phosphoserine; by CDK1. GTP-binding residues include N204 and N226. The residue at position 436 (E436) is a 5-glutamyl polyglutamate.

The protein belongs to the tubulin family. As to quaternary structure, dimer of alpha and beta chains. A typical microtubule is a hollow water-filled tube with an outer diameter of 25 nm and an inner diameter of 15 nM. Alpha-beta heterodimers associate head-to-tail to form protofilaments running lengthwise along the microtubule wall with the beta-tubulin subunit facing the microtubule plus end conferring a structural polarity. Microtubules usually have 13 protofilaments but different protofilament numbers can be found in some organisms and specialized cells. Requires Mg(2+) as cofactor. Post-translationally, some glutamate residues at the C-terminus are polyglycylated, resulting in polyglycine chains on the gamma-carboxyl group. Glycylation is mainly limited to tubulin incorporated into axonemes (cilia and flagella) whereas glutamylation is prevalent in neuronal cells, centrioles, axonemes, and the mitotic spindle. Both modifications can coexist on the same protein on adjacent residues, and lowering polyglycylation levels increases polyglutamylation, and reciprocally. Cilia and flagella glycylation is required for their stability and maintenance. Flagella glycylation controls sperm motility. Some glutamate residues at the C-terminus are polyglutamylated, resulting in polyglutamate chains on the gamma-carboxyl group. Polyglutamylation plays a key role in microtubule severing by spastin (SPAST). SPAST preferentially recognizes and acts on microtubules decorated with short polyglutamate tails: severing activity by SPAST increases as the number of glutamates per tubulin rises from one to eight, but decreases beyond this glutamylation threshold. Glutamylation is also involved in cilia motility. In terms of processing, phosphorylated on Ser-172 by CDK1 during the cell cycle, from metaphase to telophase, but not in interphase. This phosphorylation inhibits tubulin incorporation into microtubules.

It is found in the cytoplasm. The protein resides in the cytoskeleton. Its function is as follows. Tubulin is the major constituent of microtubules, a cylinder consisting of laterally associated linear protofilaments composed of alpha- and beta-tubulin heterodimers. Microtubules grow by the addition of GTP-tubulin dimers to the microtubule end, where a stabilizing cap forms. Below the cap, tubulin dimers are in GDP-bound state, owing to GTPase activity of alpha-tubulin. The polypeptide is Tubulin beta-4A chain (TUBB4A) (Bos taurus (Bovine)).